A 161-amino-acid polypeptide reads, in one-letter code: Phosphopantetheine adenylyltransferase (161 aa).

S8 is a substrate binding site. ATP-binding positions include 8-9 (SF) and H16. The substrate site is built by K40, L72, and R86. ATP contacts are provided by residues 87 to 89 (GLR), E97, and 122 to 128 (FSFVSSS).

Belongs to the bacterial CoaD family. Homohexamer. Mg(2+) is required as a cofactor.

The protein resides in the cytoplasm. It catalyses the reaction (R)-4'-phosphopantetheine + ATP + H(+) = 3'-dephospho-CoA + diphosphate. It participates in cofactor biosynthesis; coenzyme A biosynthesis; CoA from (R)-pantothenate: step 4/5. Reversibly transfers an adenylyl group from ATP to 4'-phosphopantetheine, yielding dephospho-CoA (dPCoA) and pyrophosphate. The polypeptide is Phosphopantetheine adenylyltransferase (Thermotoga neapolitana (strain ATCC 49049 / DSM 4359 / NBRC 107923 / NS-E)).